The chain runs to 21 residues: Kassinatuerin-1 (21 aa).

Position 21 is an isoleucine amide (I21).

In terms of tissue distribution, expressed by the skin dorsal glands.

The protein resides in the secreted. In terms of biological role, shows broad-spectrum antimicrobial activity against the Gram-negative bacterium E.coli (MIC=6.25 uM), K.pneumoniae (MIC=25 uM), E.cloacae (MIC=6.25 uM), P.aeruginosa (MIC=25 uM), the Gram-positive bacterium S.aureus (MIC=6.25 uM), S.epidermidis (MIC=6.25 uM), E.faecalis (MIC=12.5 uM), and the fungus C.albicans (MIC=100 uM). Has no antimicrobial effect against P.mirabilis (MIC&gt;100 uM). Has relatively high cytolytic and hemolytic activities. Its alpha-helix has considerable amphipathic character. In Kassina senegalensis (Senegal running frog), this protein is Kassinatuerin-1.